A 150-amino-acid chain; its full sequence is Globin-2 A chain (150 aa).

Val-2 carries the post-translational modification Blocked amino end (Val). The region spanning 10–150 (CGSEAIKANL…ALVGVVQAAL (141 aa)) is the Globin domain. His-102 lines the heme b pocket.

It belongs to the globin family. Heterotetramer of two alpha chains and two beta chains.

In Anadara inaequivalvis (Inequivalve ark), this protein is Globin-2 A chain.